Consider the following 429-residue polypeptide: MVNPEENNRNLVVKPITEILQDDDKRSRKFGVEMKRQNRRALGVINHNLVGAKAYPCVVNKRRGLSQRKQESCDKKKLDSLHPSISRSQEETKKLKPSGNEFGDCIFIDEEEEKNEEVTLDQPMPMSLEEPYIEFDPMEEEVEMEDMEEEQEEPVLDIDEYDANNSLAAVEYVQDLYDFYRKTERFSCVPLDYMAQQFDISDKMRAILIDWLIEVHDKFELMNETLFLTVNLIDRFLSKQAVARKKLQLVGLVALLLACKYEEVSVPIVEDLVVISDKAYTRTDVLEMEKIMLSTLQFNMSLPTQYPFLKRFLKAAQSDKKLEILASFLIELALVDYEMVRYPPSLLAATAVYTAQCTIHGFSEWNSTCEFHCHYSENQLLECCRRMVRLHQKAGTDKLTGVHRKYSSSKFGYIATKYEAAHFLVSDSH.

The tract at residues 66–98 (SQRKQESCDKKKLDSLHPSISRSQEETKKLKPS) is disordered. Over residues 68-80 (RKQESCDKKKLDS) the composition is skewed to basic and acidic residues.

Belongs to the cyclin family. Cyclin AB subfamily. As to quaternary structure, interacts with CDC20-1 and CDC20-2. Expressed in roots.

The protein is Cyclin-B2-2 (CYCB2-2) of Arabidopsis thaliana (Mouse-ear cress).